Consider the following 540-residue polypeptide: MTAKDVKFRDGARSQIVKGVNVLADAVKVTLGPKGRNVVIERSFGAPVITKDGVSVAKEIELKDRFENMGAQIVKQVASKTADVAGDGTTTATVLAQAIVQEGMKHVAAGMNPMDLKRGIDKAVGVVLEELRTLSRPISTHKEIAQVGAISANADDAIGKIIADAMEKVGKEGVITVEDGKSLDNELDVVEGMQFDRGYISPYFINDPEKQAAYLDDALILLHDKKISNIRDLLPILEAASKAGKPLLIVAEDVEAEALATLVVNAMRGILKVAAVKAPGFGDRRKAMLEDIAILTGATVISEETGKQLDKATLDDLGSAKRVEVRKDDTIIIDGAGDAARIDARVKSIRVQIDEATSDYDREKLQERVAKLAGGVAVIKVGAVTEVEMKEKKDRVDDALHATRAAVEEGIVPGGGVALLRARAALTDLKGANGDQDAGIRIVLRALEAPLRVIASNAGDEPSVVIAKVLEGSGNFGYNAATGEYGDLVEAGVVDPTKVTRTALQNAASIAGLVLTTDATVADAPKDERAEAAPSPELGY.

Residues 30–33, Lys51, 87–91, Gly415, 479–481, and Asp495 each bind ATP; these read TLGP, DGTTT, and NAA.

This sequence belongs to the chaperonin (HSP60) family. In terms of assembly, forms a cylinder of 14 subunits composed of two heptameric rings stacked back-to-back. Interacts with the co-chaperonin GroES.

Its subcellular location is the cytoplasm. It carries out the reaction ATP + H2O + a folded polypeptide = ADP + phosphate + an unfolded polypeptide.. Functionally, together with its co-chaperonin GroES, plays an essential role in assisting protein folding. The GroEL-GroES system forms a nano-cage that allows encapsulation of the non-native substrate proteins and provides a physical environment optimized to promote and accelerate protein folding. The chain is Chaperonin GroEL 2 from Burkholderia vietnamiensis (strain G4 / LMG 22486) (Burkholderia cepacia (strain R1808)).